The primary structure comprises 623 residues: Calnexin (623 aa).

A signal peptide spans 1 to 21; it reads MLNRKWSFVFLTFLLVISVNA. Position 108 (Asp108) interacts with Ca(2+). Residues Cys151 and Cys185 are joined by a disulfide bond. Tyr155, Lys157, Tyr176, and Asp183 together coordinate an alpha-D-glucoside. N-linked (GlcNAc...) asparagine glycosylation occurs at Asn202. A disordered region spans residues 260–337; sequence SLTPPKEIFD…QKPQDWDEDM (78 aa). Residues 266 to 276 show a composition bias toward basic and acidic residues; the sequence is EIFDETDLKPE. Positions 267–400 are p domain (Extended arm); sequence IFDETDLKPE…RLIDNPNYFE (134 aa). A run of 5 repeats spans residues 269 to 281, 286 to 298, 305 to 317, 324 to 336, and 339 to 349. 4 X approximate repeats stretches follow at residues 269–336 and 339–396; these read DETD…WDED and GSWE…IDNP. Composition is skewed to acidic residues over residues 277-287 and 314-323; these read DWDEREQIEDE and WNEEENELIP. A disulfide bridge links Cys351 with Cys357. A run of 3 repeats spans residues 358-368, 372-382, and 386-396. Glu416 is an an alpha-D-glucoside binding site. Asp427 serves as a coordination point for Ca(2+). Residues 480-500 traverse the membrane as a helical segment; sequence LWAVYILCILLPLIAIGVFCF. Residues 536-623 form a disordered region; the sequence is IAEDEEDNQP…AKRRTARRGD (88 aa). The segment covering 556-565 has biased composition (acidic residues); sequence IDEDEQDEVE. Residues 566–581 are compositionally biased toward low complexity; the sequence is QQPSSSKTASSESSSA. The span at 614-623 shows a compositional bias: basic residues; the sequence is AKRRTARRGD.

It belongs to the calreticulin family. Post-translationally, glycosylation is important for its biological activity.

The protein localises to the endoplasmic reticulum membrane. The protein resides in the cytoplasm. It localises to the perinuclear region. Its subcellular location is the cytoplasmic vesicle. Its function is as follows. Calcium-binding protein that interacts with newly synthesized monoglucosylated glycoproteins in the endoplasmic reticulum. It may act in assisting protein assembly and/or in the retention within the ER of unassembled protein subunits. It seems to play a major role in the quality control apparatus of the ER by the retention of incorrectly folded proteins. Required for embryogenesis and larval development under heat and ER stress conditions. May be important for germ cell development. Involved in neuronal necrotic cell death. The chain is Calnexin from Caenorhabditis briggsae.